The sequence spans 247 residues: PF03932 family protein CutC (247 aa).

Belongs to the CutC family.

Its subcellular location is the cytoplasm. The protein is PF03932 family protein CutC of Enterobacter sp. (strain 638).